Here is a 307-residue protein sequence, read N- to C-terminus: 4-diphosphocytidyl-2-C-methyl-D-erythritol kinase (307 aa).

Lys9 is an active-site residue. Residue 94 to 104 (PIGAGLAGGSS) participates in ATP binding. Asp136 is an active-site residue.

It belongs to the GHMP kinase family. IspE subfamily.

The enzyme catalyses 4-CDP-2-C-methyl-D-erythritol + ATP = 4-CDP-2-C-methyl-D-erythritol 2-phosphate + ADP + H(+). The protein operates within isoprenoid biosynthesis; isopentenyl diphosphate biosynthesis via DXP pathway; isopentenyl diphosphate from 1-deoxy-D-xylulose 5-phosphate: step 3/6. In terms of biological role, catalyzes the phosphorylation of the position 2 hydroxy group of 4-diphosphocytidyl-2C-methyl-D-erythritol. This chain is 4-diphosphocytidyl-2-C-methyl-D-erythritol kinase, found in Synechococcus sp. (strain CC9902).